Here is a 392-residue protein sequence, read N- to C-terminus: Succinyl-diaminopimelate desuccinylase (392 aa).

H75 serves as a coordination point for Zn(2+). D77 is an active-site residue. Residue D108 participates in Zn(2+) binding. E147 functions as the Proton acceptor in the catalytic mechanism. Zn(2+) is bound by residues E148, E176, and H365.

It belongs to the peptidase M20A family. DapE subfamily. As to quaternary structure, homodimer. Requires Zn(2+) as cofactor. The cofactor is Co(2+).

It carries out the reaction N-succinyl-(2S,6S)-2,6-diaminopimelate + H2O = (2S,6S)-2,6-diaminopimelate + succinate. Its pathway is amino-acid biosynthesis; L-lysine biosynthesis via DAP pathway; LL-2,6-diaminopimelate from (S)-tetrahydrodipicolinate (succinylase route): step 3/3. Functionally, catalyzes the hydrolysis of N-succinyl-L,L-diaminopimelic acid (SDAP), forming succinate and LL-2,6-diaminopimelate (DAP), an intermediate involved in the bacterial biosynthesis of lysine and meso-diaminopimelic acid, an essential component of bacterial cell walls. The protein is Succinyl-diaminopimelate desuccinylase of Rhodopseudomonas palustris (strain BisB18).